The following is a 167-amino-acid chain: NAD(P)H-quinone oxidoreductase subunit I, chloroplastic (167 aa).

2 4Fe-4S ferredoxin-type domains span residues 55–84 (GRIHFEFDKCIACEVCVRVCPIDLPVVDWK) and 95–124 (LNYSIDFGICIFCGNCVEYCPTNCLSMTEE). [4Fe-4S] cluster-binding residues include Cys-64, Cys-67, Cys-70, Cys-74, Cys-104, Cys-107, Cys-110, and Cys-114.

This sequence belongs to the complex I 23 kDa subunit family. In terms of assembly, NDH is composed of at least 16 different subunits, 5 of which are encoded in the nucleus. [4Fe-4S] cluster is required as a cofactor.

The protein localises to the plastid. Its subcellular location is the chloroplast thylakoid membrane. The enzyme catalyses a plastoquinone + NADH + (n+1) H(+)(in) = a plastoquinol + NAD(+) + n H(+)(out). The catalysed reaction is a plastoquinone + NADPH + (n+1) H(+)(in) = a plastoquinol + NADP(+) + n H(+)(out). Functionally, NDH shuttles electrons from NAD(P)H:plastoquinone, via FMN and iron-sulfur (Fe-S) centers, to quinones in the photosynthetic chain and possibly in a chloroplast respiratory chain. The immediate electron acceptor for the enzyme in this species is believed to be plastoquinone. Couples the redox reaction to proton translocation, and thus conserves the redox energy in a proton gradient. The polypeptide is NAD(P)H-quinone oxidoreductase subunit I, chloroplastic (Solanum tuberosum (Potato)).